A 133-amino-acid polypeptide reads, in one-letter code: NLP effector protein 14 (133 aa).

Residues 1–9 (MYSWYFPKD) carry the Conserved undecapeptide motifI I motif. The Hepta-peptide GHRHDWE motif II signature appears at 16 to 22 (GHRHDWE).

This sequence belongs to the Necrosis inducing protein (NPP1) family.

The protein localises to the secreted. In terms of biological role, secreted effector that contributes strongly to virulence during infection by P.capsici. Causes large necrotic areas in both host C.annuum and non-host N.benthamiana. This Phytophthora capsici protein is NLP effector protein 14.